A 285-amino-acid polypeptide reads, in one-letter code: NAD kinase (285 aa).

The active-site Proton acceptor is the aspartate 64. Residues 64 to 65 (DG), 140 to 141 (ND), arginine 151, arginine 168, aspartate 170, and 181 to 186 (TGYNLS) contribute to the NAD(+) site.

Belongs to the NAD kinase family. A divalent metal cation serves as cofactor.

It is found in the cytoplasm. The catalysed reaction is NAD(+) + ATP = ADP + NADP(+) + H(+). In terms of biological role, involved in the regulation of the intracellular balance of NAD and NADP, and is a key enzyme in the biosynthesis of NADP. Catalyzes specifically the phosphorylation on 2'-hydroxyl of the adenosine moiety of NAD to yield NADP. The chain is NAD kinase from Lachnoclostridium phytofermentans (strain ATCC 700394 / DSM 18823 / ISDg) (Clostridium phytofermentans).